The sequence spans 403 residues: Leu/Ile/Val-binding protein homolog 8 (403 aa).

The first 26 residues, 1 to 26 (MRLSRLLIGASLGVALSSTVFTAALA), serve as a signal peptide directing secretion.

It belongs to the leucine-binding protein family.

Its function is as follows. Component of an amino-acid transport system. The sequence is that of Leu/Ile/Val-binding protein homolog 8 from Brucella melitensis biotype 1 (strain ATCC 23456 / CCUG 17765 / NCTC 10094 / 16M).